We begin with the raw amino-acid sequence, 30 residues long: U1-poneritoxin-Ni3d (30 aa).

It belongs to the ponericin-G family. Expressed by the venom gland.

Its subcellular location is the secreted. Has activity against some Gram-positive bacteria and S.cerevisiae. Has a non-hemolytic activity. In Neoponera inversa (Ant), this protein is U1-poneritoxin-Ni3d.